Consider the following 128-residue polypeptide: Large ribosomal subunit protein bL12 (128 aa).

Belongs to the bacterial ribosomal protein bL12 family. As to quaternary structure, homodimer. Part of the ribosomal stalk of the 50S ribosomal subunit. Forms a multimeric L10(L12)X complex, where L10 forms an elongated spine to which 2 to 4 L12 dimers bind in a sequential fashion. Binds GTP-bound translation factors.

Its function is as follows. Forms part of the ribosomal stalk which helps the ribosome interact with GTP-bound translation factors. Is thus essential for accurate translation. The protein is Large ribosomal subunit protein bL12 of Desulfosudis oleivorans (strain DSM 6200 / JCM 39069 / Hxd3) (Desulfococcus oleovorans).